The primary structure comprises 279 residues: Sarcosine/dimethylglycine N-methyltransferase (279 aa).

The protein belongs to the methyltransferase superfamily. As to quaternary structure, monomer.

It catalyses the reaction sarcosine + 2 S-adenosyl-L-methionine = glycine betaine + 2 S-adenosyl-L-homocysteine + 2 H(+). The enzyme catalyses sarcosine + S-adenosyl-L-methionine = N,N-dimethylglycine + S-adenosyl-L-homocysteine + H(+). The catalysed reaction is N,N-dimethylglycine + S-adenosyl-L-methionine = glycine betaine + S-adenosyl-L-homocysteine + H(+). It functions in the pathway amine and polyamine biosynthesis; betaine biosynthesis via glycine pathway; betaine from glycine: step 2/3. It participates in amine and polyamine biosynthesis; betaine biosynthesis via glycine pathway; betaine from glycine: step 3/3. With respect to regulation, p-chloromercuribenzoate acid inhibits 23% of the SDMT activities on sarcosine and dimethylglycine, and S-adenosylhomocysteine (AdoHcy) inhibits completely GSMT activities. Its function is as follows. Catalyzes the methylation of sarcosine and dimethylglycine to dimethylglycine and betaine, respectively, with S-adenosylmethionine (AdoMet) acting as the methyl donor. It has strict specificity for sarcosine and dimethylglycine as the methyl group acceptors. This Halorhodospira halochloris (Ectothiorhodospira halochloris) protein is Sarcosine/dimethylglycine N-methyltransferase.